The following is a 496-amino-acid chain: Glycerol kinase (496 aa).

Position 12 (threonine 12) interacts with ADP. Positions 12, 13, and 14 each coordinate ATP. Threonine 12 is a sn-glycerol 3-phosphate binding site. Residue arginine 16 coordinates ADP. The sn-glycerol 3-phosphate site is built by arginine 82, glutamate 83, tyrosine 134, and aspartate 244. Residues arginine 82, glutamate 83, tyrosine 134, aspartate 244, and glutamine 245 each coordinate glycerol. The ADP site is built by threonine 266 and glycine 309. ATP is bound by residues threonine 266, glycine 309, glutamine 313, and glycine 410. Residues glycine 410 and asparagine 414 each coordinate ADP.

The protein belongs to the FGGY kinase family.

The catalysed reaction is glycerol + ATP = sn-glycerol 3-phosphate + ADP + H(+). It participates in polyol metabolism; glycerol degradation via glycerol kinase pathway; sn-glycerol 3-phosphate from glycerol: step 1/1. With respect to regulation, inhibited by fructose 1,6-bisphosphate (FBP). Functionally, key enzyme in the regulation of glycerol uptake and metabolism. Catalyzes the phosphorylation of glycerol to yield sn-glycerol 3-phosphate. This Treponema denticola (strain ATCC 35405 / DSM 14222 / CIP 103919 / JCM 8153 / KCTC 15104) protein is Glycerol kinase.